Consider the following 261-residue polypeptide: Thiazole synthase (261 aa).

The active-site Schiff-base intermediate with DXP is the Lys-102. 1-deoxy-D-xylulose 5-phosphate contacts are provided by residues Gly-163, 189 to 190, and 211 to 212; these read AG and NT.

It belongs to the ThiG family. In terms of assembly, homotetramer. Forms heterodimers with either ThiH or ThiS.

Its subcellular location is the cytoplasm. The catalysed reaction is [ThiS sulfur-carrier protein]-C-terminal-Gly-aminoethanethioate + 2-iminoacetate + 1-deoxy-D-xylulose 5-phosphate = [ThiS sulfur-carrier protein]-C-terminal Gly-Gly + 2-[(2R,5Z)-2-carboxy-4-methylthiazol-5(2H)-ylidene]ethyl phosphate + 2 H2O + H(+). It participates in cofactor biosynthesis; thiamine diphosphate biosynthesis. Functionally, catalyzes the rearrangement of 1-deoxy-D-xylulose 5-phosphate (DXP) to produce the thiazole phosphate moiety of thiamine. Sulfur is provided by the thiocarboxylate moiety of the carrier protein ThiS. In vitro, sulfur can be provided by H(2)S. In Acinetobacter baylyi (strain ATCC 33305 / BD413 / ADP1), this protein is Thiazole synthase.